Consider the following 230-residue polypeptide: MTGRDSASSDITPEVLLRAYACGIFPMAESVDDPTLFWVEPERRGIIPLDGFKVASRLARTVRSDVFTVSVDRAFKQVIDGCAAPQPGREDTWINRRIRELYIGLYQLGHCHSVEVWQNDDLVGGLYGVNLGRAFFGESMFHRARDASKVALVHLVARLIEGGFVLLDTQFVTEHLRTFGATEVPRRRYRAMLDVAITGAADFARLPTEQPIAGTRALAIISGREGLGRG.

The protein belongs to the L/F-transferase family.

The protein resides in the cytoplasm. It carries out the reaction N-terminal L-lysyl-[protein] + L-leucyl-tRNA(Leu) = N-terminal L-leucyl-L-lysyl-[protein] + tRNA(Leu) + H(+). The enzyme catalyses N-terminal L-arginyl-[protein] + L-leucyl-tRNA(Leu) = N-terminal L-leucyl-L-arginyl-[protein] + tRNA(Leu) + H(+). The catalysed reaction is L-phenylalanyl-tRNA(Phe) + an N-terminal L-alpha-aminoacyl-[protein] = an N-terminal L-phenylalanyl-L-alpha-aminoacyl-[protein] + tRNA(Phe). In terms of biological role, functions in the N-end rule pathway of protein degradation where it conjugates Leu, Phe and, less efficiently, Met from aminoacyl-tRNAs to the N-termini of proteins containing an N-terminal arginine or lysine. This Rhodopseudomonas palustris (strain BisB18) protein is Leucyl/phenylalanyl-tRNA--protein transferase.